The chain runs to 304 residues: D-alanine--D-alanine ligase (304 aa).

One can recognise an ATP-grasp domain in the interval 104–299; that stretch reads KMVWLSCGLP…FEALCLAILA (196 aa). Position 130–185 (130–185) interacts with ATP; the sequence is ARDLGLPIFVKPVHEGSSMGATKVTEAGQLRAAWELAARYDSLVIAEEFISGQELT. Mg(2+)-binding residues include D253, E266, and N268.

This sequence belongs to the D-alanine--D-alanine ligase family. Mg(2+) is required as a cofactor. Requires Mn(2+) as cofactor.

Its subcellular location is the cytoplasm. The enzyme catalyses 2 D-alanine + ATP = D-alanyl-D-alanine + ADP + phosphate + H(+). It participates in cell wall biogenesis; peptidoglycan biosynthesis. Cell wall formation. This chain is D-alanine--D-alanine ligase, found in Azoarcus sp. (strain BH72).